Reading from the N-terminus, the 53-residue chain is Neuronal protein NP-190 (53 aa).

Mainly expressed in the fetal brain where it is specifically localized to the proximal axonal segments, cell bodies and growth cones. Lower level of expression was also detected in the fetal heart and the skeletal muscle. No expression in kidney, liver, lung or spleen.

It is found in the membrane. In terms of biological role, neuronal antigen that may play a role in brain development. May be involved in neurite formation or axonal guidance. The polypeptide is Neuronal protein NP-190 (Sus scrofa (Pig)).